A 153-amino-acid chain; its full sequence is ORM1-like protein 2 (153 aa).

The Cytoplasmic portion of the chain corresponds to 1–21 (MNVGVAHSEVNPNTRVMNSRG). Transmembrane regions (helical) follow at residues 22 to 42 (IWLA…SIPF) and 43 to 63 (FSIP…MYIF). At 64 to 105 (LHTVKGTPFETPDQGKARLLTHWEQMDYGLQFTSSRKFLSIS) the chain is on the cytoplasmic side. The helical transmembrane segment at 106–126 (PIVLYLLASFYTKYDAAHFLI) threads the bilayer. Over 127–153 (NTASLLSVLLPKLPQFHGVRLFGINKY) the chain is Extracellular.

The protein belongs to the ORM family. In terms of assembly, ceramide-sensitive subunit of the serine palmitoyltransferase (SPT) complex, which is also composed of SPTLC1, SPTLC2/3 and SPTSSA/B.

Its subcellular location is the endoplasmic reticulum membrane. In terms of biological role, plays an essential role in the homeostatic regulation of sphingolipid de novo biosynthesis by modulating the activity of the serine palmitoyltransferase (SPT) in response to ceramide levels. When complexed to SPT, the binding of ceramides to its N-terminus stabilizes a conformation that block SPT substrate entry, hence preventing SPT catalytic activity. Through this mechanism, maintains ceramide levels at sufficient concentrations for the production of complex sphingolipids, but which prevents the accumulation of ceramides to levels that trigger apoptosis. The polypeptide is ORM1-like protein 2 (Ormdl2) (Mus musculus (Mouse)).